We begin with the raw amino-acid sequence, 334 residues long: N-acetyl-gamma-glutamyl-phosphate reductase (334 aa).

The active site involves Cys-154.

It belongs to the NAGSA dehydrogenase family. Type 1 subfamily.

The protein localises to the cytoplasm. The enzyme catalyses N-acetyl-L-glutamate 5-semialdehyde + phosphate + NADP(+) = N-acetyl-L-glutamyl 5-phosphate + NADPH + H(+). It participates in amino-acid biosynthesis; L-arginine biosynthesis; N(2)-acetyl-L-ornithine from L-glutamate: step 3/4. Its function is as follows. Catalyzes the NADPH-dependent reduction of N-acetyl-5-glutamyl phosphate to yield N-acetyl-L-glutamate 5-semialdehyde. In Photorhabdus laumondii subsp. laumondii (strain DSM 15139 / CIP 105565 / TT01) (Photorhabdus luminescens subsp. laumondii), this protein is N-acetyl-gamma-glutamyl-phosphate reductase.